Here is a 405-residue protein sequence, read N- to C-terminus: Cytochrome P450 130 (405 aa).

2 residues coordinate substrate: D93 and H97. 7 residues coordinate heme: R101, G243, R295, Y318, S348, H352, and C354.

Belongs to the cytochrome P450 family. In terms of assembly, homodimer. Heme serves as cofactor.

The protein is Cytochrome P450 130 (cyp130) of Mycobacterium tuberculosis (strain CDC 1551 / Oshkosh).